The chain runs to 295 residues: Probable protein phosphatase 2C 54 (295 aa).

Residues 78–289 enclose the PPM-type phosphatase domain; the sequence is GHGVVSVMGR…ENINVIVIDL (212 aa). Mn(2+)-binding residues include Asp-112, Gly-113, Asp-228, and Glu-280.

It belongs to the PP2C family. It depends on Mg(2+) as a cofactor. The cofactor is Mn(2+).

The enzyme catalyses O-phospho-L-seryl-[protein] + H2O = L-seryl-[protein] + phosphate. It carries out the reaction O-phospho-L-threonyl-[protein] + H2O = L-threonyl-[protein] + phosphate. In Arabidopsis thaliana (Mouse-ear cress), this protein is Probable protein phosphatase 2C 54.